The sequence spans 136 residues: Protein NrdI (136 aa).

The protein belongs to the NrdI family.

In terms of biological role, probably involved in ribonucleotide reductase function. The chain is Protein NrdI from Shigella boydii serotype 4 (strain Sb227).